The chain runs to 620 residues: MYND-type zinc finger protein MUB1 (620 aa).

The segment at 514 to 555 (NFSCGKWEDFPRQFAKCRRCKRTKYCSRKCQLKAWGYHRYWC) adopts an MYND-type; degenerate zinc-finger fold. Zn(2+)-binding residues include cysteine 530, cysteine 533, histidine 551, and cysteine 555. Polar residues predominate over residues 563–606 (MRSTNTTTGVNTPNEPSSLNATATTAADVSNSTSTFTPNISTTV). Residues 563–620 (MRSTNTTTGVNTPNEPSSLNATATTAADVSNSTSTFTPNISTTVPDEISNRDENSIPE) are disordered. The segment covering 610-620 (ISNRDENSIPE) has biased composition (basic and acidic residues).

This sequence belongs to the MUB1/samB family. In terms of assembly, interacts with UBR2 and RPN4.

The protein localises to the cytoplasm. Involved in the determination of the onset of polarized growth. Required for the ubiquitin-dependent degradation of RPN4. Cooperates with UBR2 to transfer ubiquitin from RAD6 to RPN4. The protein is MYND-type zinc finger protein MUB1 (MUB1) of Saccharomyces cerevisiae (strain ATCC 204508 / S288c) (Baker's yeast).